The sequence spans 419 residues: L-rhamnose isomerase (419 aa).

Residues His262, Asp294, and Asp296 each coordinate Mn(2+).

It belongs to the rhamnose isomerase family. In terms of assembly, homotetramer. The cofactor is Mn(2+).

It localises to the cytoplasm. The enzyme catalyses L-rhamnopyranose = L-rhamnulose. The protein operates within carbohydrate degradation; L-rhamnose degradation; glycerone phosphate from L-rhamnose: step 1/3. Functionally, catalyzes the interconversion of L-rhamnose and L-rhamnulose. In Salmonella newport (strain SL254), this protein is L-rhamnose isomerase.